A 248-amino-acid chain; its full sequence is MNFYRSSIISQIIKYNRRLAKSIICEDDSQIITLTAFVNQCLWCHKRVSVSAILLTTDNKILVCNRRDSFLYSEIIRTRNMSRKKRLFLNYSNYLNKQERSILSSFFSLDPATIDNDRIDAIYPGGILKRGENVPECLSREIKEEVNIDNSFVFIDTRFFIHGIIEDTIINKFFEVIFFVGRISLTSDQIIDTFKSNHEIKDLIFLDPNSGNGLQYEIAKYALDTAKLKCYGHRGCYYESLKKLTEDD.

In terms of domain architecture, Nudix hydrolase spans 45–227; it reads HKRVSVSAIL…IAKYALDTAK (183 aa). Positions 125–147 match the Nudix box motif; it reads GGILKRGENVPECLSREIKEEVN. Glu132 is a Mg(2+) binding site. Glu141 functions as the Nucleophile in the catalytic mechanism. Glu145 serves as a coordination point for Mn(2+). Asp167 lines the Mg(2+) pocket.

It belongs to the Nudix hydrolase family. Mg(2+) is required as a cofactor. The cofactor is Mn(2+).

Its subcellular location is the host mitochondrion. Functionally, decapping enzyme that remove the protective 5'-cap from both host and viral mRNAs to commit transcripts for decay by the cellular exonuclease XRN1. Preferentially targets spliced mRNAs and since all viral genes are intronless, it preferentially targets host over viral transcripts. Acceleration of the turnover of cellular transcripts promotes the shutoff of host protein synthesis and therefore diminish the magnitude of antiviral response. This Variola virus (isolate Human/India/Ind3/1967) (VARV) protein is mRNA-decapping protein OPG122 (OPG122).